Here is a 373-residue protein sequence, read N- to C-terminus: Beta sliding clamp homolog GriR (373 aa).

It belongs to the beta sliding clamp family. Forms a ring-shaped head-to-tail homodimer around DNA which binds and tethers DNA polymerases and other proteins to the DNA. The DNA replisome complex has a single clamp-loading complex (3 tau and 1 each of delta, delta', psi and chi subunits) which binds 3 Pol III cores (1 core on the leading strand and 2 on the lagging strand) each with a beta sliding clamp dimer. Additional proteins in the replisome are other copies of gamma, psi and chi, Ssb, DNA helicase and RNA primase.

It is found in the cytoplasm. Its function is as follows. A homolog of the beta sliding clamp protein encoded within the biosynthetic cluster for griselimycin synthesis. Upon expression in S.coelicolor A3(2), which is susceptible to this antibiotic, confers resistance to griselimycin. The beta sliding clamp confers DNA tethering and processivity to DNA polymerases and other proteins. Acts as a clamp, forming a ring around DNA (a reaction catalyzed by the clamp-loading complex) which diffuses in an ATP-independent manner freely and bidirectionally along dsDNA. Initially characterized for its ability to contact the catalytic subunit of DNA polymerase III (Pol III), a complex, multichain enzyme responsible for most of the replicative synthesis in bacteria; Pol III exhibits 3'-5' exonuclease proofreading activity. The beta chain is required for initiation of replication as well as for processivity of DNA replication. In Streptomyces muensis, this protein is Beta sliding clamp homolog GriR.